Here is a 118-residue protein sequence, read N- to C-terminus: MLGAYLPILVLVAIAVIFGLCSLVFSSLIGQKKPSVVKLAPYECGCEPVGSARERFSVKFYIIAMLFILFDIEAVFLYPWSVLFKRLGMFGVMEMGVFIVILFVGYIYVWKKGALEWE.

The next 3 helical transmembrane spans lie at 5-25 (YLPI…SLVF), 60-80 (FYII…LYPW), and 87-107 (LGMF…VGYI).

This sequence belongs to the complex I subunit 3 family. NDH-1 is composed of 14 different subunits. Subunits NuoA, H, J, K, L, M, N constitute the membrane sector of the complex.

The protein localises to the cell inner membrane. It carries out the reaction a quinone + NADH + 5 H(+)(in) = a quinol + NAD(+) + 4 H(+)(out). Its function is as follows. NDH-1 shuttles electrons from NADH, via FMN and iron-sulfur (Fe-S) centers, to quinones in the respiratory chain. The immediate electron acceptor for the enzyme in this species is believed to be ubiquinone. Couples the redox reaction to proton translocation (for every two electrons transferred, four hydrogen ions are translocated across the cytoplasmic membrane), and thus conserves the redox energy in a proton gradient. This chain is NADH-quinone oxidoreductase subunit A 2, found in Geobacter metallireducens (strain ATCC 53774 / DSM 7210 / GS-15).